The sequence spans 723 residues: MSESSGSALQPGRPSRQPAVHPENLSLDSSCFSSPPVNFLQELPSYRSIARRRTTVHSRDKQSGTLLKPTDSYSSQLEDRIAENLSSHSLRNYALNISEKRRLRDIQETQMKYLSEWDQWKRYSSKSWKRFLEKAREMTTHLELWREDIRSIEGKFGTGIQSYFSFLRFLVLLNLVIFLIIFMLVLLPVLLTKYKITNSSFVLIPFKDMDKQCTVYPVSSSGLIYFYSYIIDLLSGTGFLEETSLFYGHYTIDGVKFQNFTYDLPLAYLLSTIASLALSLLWIVKRSVEGFKINLIRSEEHFQSYCNKIFAGWDFCITNRSMADLKHSSLRYELRADLEEERMRQKIAERTSEETIRIYSLRLFLNCIVLAVLGACFYAIYVATVFSQEHMKKEIDKMVFGENLFILYLPSIVITLANFITPMIFAKIIRYEDYSPGFEIRLTILRCVFMRLATICVLVFTLGSKITSCDDDTCDLCGYNQKLYPCWETQVGQEMYKLMIFDFIIILAVTLFVDFPRKLLVTYCSSCKLIQCWGQQEFAIPDNVLGIVYGQTICWIGAFFSPLLPAIATLKFIIIFYVKEWSLLYTCRPSPRPFRASNSNFFFLLVLLIGLCLAIIPLTISISRIPSSKACGPFTNFNTTWEVIPKTVSTFPSSLQSFIHGVTSEAFAVPFFMIICLIMFYFIALAGAHKRVVIQLREQLSLESRDKCYLIQKLTEAQRDMRN.

Disordered regions lie at residues 1 to 28 (MSESSGSALQPGRPSRQPAVHPENLSLD) and 51 to 71 (RRRTTVHSRDKQSGTLLKPTD). The Extracellular portion of the chain corresponds to 1 to 168 (MSESSGSALQ…GIQSYFSFLR (168 aa)). Asn24 carries N-linked (GlcNAc...) asparagine glycosylation. Asn84 is a glycosylation site (N-linked (GlcNAc...) asparagine). Ser89 bears the Phosphoserine mark. Residue Asn96 is glycosylated (N-linked (GlcNAc...) asparagine). A helical membrane pass occupies residues 169–189 (FLVLLNLVIFLIIFMLVLLPV). Over 190-219 (LLTKYKITNSSFVLIPFKDMDKQCTVYPVS) the chain is Cytoplasmic. Residues 220 to 240 (SSGLIYFYSYIIDLLSGTGFL) traverse the membrane as a helical segment. The Extracellular portion of the chain corresponds to 241–263 (EETSLFYGHYTIDGVKFQNFTYD). A glycan (N-linked (GlcNAc...) asparagine) is linked at Asn259. The helical transmembrane segment at 264–284 (LPLAYLLSTIASLALSLLWIV) threads the bilayer. At 285-362 (KRSVEGFKIN…EETIRIYSLR (78 aa)) the chain is on the cytoplasmic side. The chain crosses the membrane as a helical span at residues 363–383 (LFLNCIVLAVLGACFYAIYVA). At 384–404 (TVFSQEHMKKEIDKMVFGENL) the chain is on the extracellular side. Residues 405 to 425 (FILYLPSIVITLANFITPMIF) traverse the membrane as a helical segment. Residues 426-494 (AKIIRYEDYS…PCWETQVGQE (69 aa)) are Cytoplasmic-facing. Residues 495–515 (MYKLMIFDFIIILAVTLFVDF) form a helical membrane-spanning segment. The Extracellular segment spans residues 516 to 555 (PRKLLVTYCSSCKLIQCWGQQEFAIPDNVLGIVYGQTICW). Residues 556-576 (IGAFFSPLLPAIATLKFIIIF) form a helical membrane-spanning segment. Over 577–601 (YVKEWSLLYTCRPSPRPFRASNSNF) the chain is Cytoplasmic. A helical transmembrane segment spans residues 602 to 622 (FFLLVLLIGLCLAIIPLTISI). Over 623-665 (SRIPSSKACGPFTNFNTTWEVIPKTVSTFPSSLQSFIHGVTSE) the chain is Extracellular. Asn638 is a glycosylation site (N-linked (GlcNAc...) asparagine). Residues 666 to 686 (AFAVPFFMIICLIMFYFIALA) form a helical membrane-spanning segment. Topologically, residues 687–723 (GAHKRVVIQLREQLSLESRDKCYLIQKLTEAQRDMRN) are cytoplasmic.

It belongs to the TMC family. As to quaternary structure, interacts with PIEZO2; the interaction inhibits PIEZO2-conducted mechanically activated currents.

It is found in the membrane. Functionally, acts as an inhibitory modulator of PIEZO2 mechanosensitive channel in dorsal root ganglion (DRG) neurons through physical interactions or interference with the interaction between PIEZO2 and the cytoskeleton. This chain is Transmembrane channel-like protein 7, found in Homo sapiens (Human).